A 263-amino-acid polypeptide reads, in one-letter code: Phosphonoacetaldehyde hydrolase (263 aa).

The Nucleophile role is filled by Asp-10. The Mg(2+) site is built by Asp-10 and Ala-12. Lys-51 (schiff-base intermediate with substrate) is an active-site residue. A Mg(2+)-binding site is contributed by Asp-184.

This sequence belongs to the HAD-like hydrolase superfamily. PhnX family. As to quaternary structure, homodimer. Mg(2+) is required as a cofactor.

The enzyme catalyses phosphonoacetaldehyde + H2O = acetaldehyde + phosphate + H(+). Its function is as follows. Involved in phosphonate degradation. In Bacteroides fragilis (strain ATCC 25285 / DSM 2151 / CCUG 4856 / JCM 11019 / LMG 10263 / NCTC 9343 / Onslow / VPI 2553 / EN-2), this protein is Phosphonoacetaldehyde hydrolase.